The primary structure comprises 393 residues: G protein-activated inward rectifier potassium channel 3 (393 aa).

Residues 1 to 23 form a disordered region; sequence MAQENAAFSPGSEEPPRRRGRQR. The Cytoplasmic segment spans residues 1-57; sequence MAQENAAFSPGSEEPPRRRGRQRYVEKDGRCNVQQGNVRETYRYLTDLFTTLVDLQW. Residues 58–82 traverse the membrane as a helical segment; that stretch reads RLSLLFFVLAYALTWLFFGAIWWLI. At 83 to 106 the chain is on the extracellular side; it reads AYGRGDLEHLEDTAWTPCVNNLNG. The helical; Pore-forming intramembrane region spans 107-118; the sequence is FVAAFLFSIETE. The pore-forming intramembrane region spans 119 to 125; it reads TTIGYGH. The short motif at 120-125 is the Selectivity filter element; sequence TIGYGH. Residues 126–134 lie on the Extracellular side of the membrane; that stretch reads RVITDQCPE. The helical transmembrane segment at 135-156 threads the bilayer; sequence GIVLLLLQAILGSMVNAFMVGC. Topologically, residues 157 to 393 are cytoplasmic; the sequence is MFVKISQPNK…LPPPESESKV (237 aa). Positions 360-393 are disordered; it reads KVEEEGAGEGAGAGDGADKEQNGCLPPPESESKV. The span at 384 to 393 shows a compositional bias: pro residues; that stretch reads LPPPESESKV. Residues 390–393 carry the PDZ-binding motif; the sequence is ESKV.

This sequence belongs to the inward rectifier-type potassium channel (TC 1.A.2.1) family. KCNJ9 subfamily. As to quaternary structure, associates with KCNJ3/GIRK1 to form a G-protein-activated heteromultimer pore-forming unit. Interacts (via PDZ-binding motif) with SNX27 (via PDZ domain); the interaction is required when endocytosed to prevent degradation in lysosomes and promote recycling to the plasma membrane.

It is found in the membrane. It catalyses the reaction K(+)(in) = K(+)(out). Functionally, this receptor is controlled by G proteins. Inward rectifier potassium channels are characterized by a greater tendency to allow potassium to flow into the cell rather than out of it. Their voltage dependence is regulated by the concentration of extracellular potassium; as external potassium is raised, the voltage range of the channel opening shifts to more positive voltages. The inward rectification is mainly due to the blockage of outward current by internal magnesium. Unable to produce channel activity when expressed alone but forms a functional channel in association with KCNJ3/GIRK1. In Rattus norvegicus (Rat), this protein is G protein-activated inward rectifier potassium channel 3 (Kcnj9).